Reading from the N-terminus, the 199-residue chain is Protein Maeo_0138 (199 aa).

Residues 7–197 (EEGKFAVKFA…ELSPNGKIVE (191 aa)) enclose the AMMECR1 domain.

The sequence is that of Protein Maeo_0138 from Methanococcus aeolicus (strain ATCC BAA-1280 / DSM 17508 / OCM 812 / Nankai-3).